The chain runs to 515 residues: Centromere protein T (515 aa).

Disordered regions lie at residues 24–156 and 271–411; these read ADSR…KRKQ and LSGK…DPHK. Over residues 29-44 the composition is skewed to basic residues; it reads PMRRRSTRINAQRRRS. Positions 45 to 58 are enriched in polar residues; the sequence is QTPYSNRQGSQTKT. The residue at position 86 (T86) is a Phosphothreonine. The tract at residues 94–375 is flexible stalk domain; that stretch reads ILLTAPESST…DSLPAEQPPP (282 aa). Over residues 296-306 the composition is skewed to polar residues; the sequence is SSGTRLQSRMS. 6 positions are modified to phosphoserine: S313, S333, S345, S346, S357, and S376.

It belongs to the CENP-T/CNN1 family. In terms of assembly, component of the CENPA-CAD complex, composed of CENPI, CENPK, CENPL, CENPO, CENPP, CENPQ, CENPR and CENPS. The CENPA-CAD complex is probably recruited on centromeres by the CENPA-NAC complex, at least composed of CENPA, CENPC, CENPH, CENPM, CENPN, CENPT and CENPU. Identified in a centromeric complex containing histones H2A, H2B, H3 and H4, and at least CENPA, CENPB, CENPC, CENPT, CENPN, HJURP, SUPT16H, SSRP1 and RSF1. Interacts (via N-terminus) with the NDC80 complex. Heterodimer with CENPW; this dimer coassembles with CENPS-CENPX heterodimers at centromeres to form the tetrameric CENP-T-W-S-X complex. In terms of processing, dynamically phosphorylated during the cell cycle. Phosphorylated during G2 phase, metaphase and anaphase, but not during telophase or G1 phase.

Its subcellular location is the nucleus. The protein resides in the chromosome. It localises to the centromere. It is found in the kinetochore. Functionally, component of the CENPA-NAC (nucleosome-associated) complex, a complex that plays a central role in assembly of kinetochore proteins, mitotic progression and chromosome segregation. The CENPA-NAC complex recruits the CENPA-CAD (nucleosome distal) complex and may be involved in incorporation of newly synthesized CENPA into centromeres. Part of a nucleosome-associated complex that binds specifically to histone H3-containing nucleosomes at the centromere, as opposed to nucleosomes containing CENPA. Component of the heterotetrameric CENP-T-W-S-X complex that binds and supercoils DNA, and plays an important role in kinetochore assembly. CENPT has a fundamental role in kinetochore assembly and function. It is one of the inner kinetochore proteins, with most further proteins binding downstream. Required for normal chromosome organization and normal progress through mitosis. The protein is Centromere protein T (Cenpt) of Mus musculus (Mouse).